Consider the following 251-residue polypeptide: Triosephosphate isomerase (251 aa).

9–11 (NWK) provides a ligand contact to substrate. Catalysis depends on His-94, which acts as the Electrophile. Glu-166 (proton acceptor) is an active-site residue. Substrate is bound by residues Gly-172, Ser-211, and 232-233 (GG).

Belongs to the triosephosphate isomerase family. Homodimer.

It is found in the cytoplasm. It carries out the reaction D-glyceraldehyde 3-phosphate = dihydroxyacetone phosphate. The protein operates within carbohydrate biosynthesis; gluconeogenesis. It participates in carbohydrate degradation; glycolysis; D-glyceraldehyde 3-phosphate from glycerone phosphate: step 1/1. Its function is as follows. Involved in the gluconeogenesis. Catalyzes stereospecifically the conversion of dihydroxyacetone phosphate (DHAP) to D-glyceraldehyde-3-phosphate (G3P). This chain is Triosephosphate isomerase, found in Xanthomonas euvesicatoria pv. vesicatoria (strain 85-10) (Xanthomonas campestris pv. vesicatoria).